Here is a 178-residue protein sequence, read N- to C-terminus: uncharacterized protein (178 aa).

It belongs to the mycobacterial PPE family.

This is an uncharacterized protein from Mycobacterium tuberculosis (strain CDC 1551 / Oshkosh).